The sequence spans 359 residues: MKNSFGSLFSFTTWGESHGPSIGVVIDGCPAGLELHESDFVPAMKRRRPGNPGTSSRKENDIVQILSGVYKGKTTGTPLSLQILNTDVDSSPYENSERLYRPGHSQYTYEKKFGIVDPNGGGRSSARETACRVAAGVVAEKFLANQNIFTLAYLSSLGSLTLPHYLKISPELIHKIHTSPFYSPLPNEKIQEILTSLHDDSDSLGGVISFITSPIHDFLGEPLFGKVHALLASALMSIPAAKGFEIGKGFASAQMRGSQYTDPFVMEGENITLKSNNCGGTLGGITIGVPIEGRIAFKPTSSIKRPCATVTKTKKETTYRTPQTGRHDPCVAIRAVPVVEAMINLVLADLVLYQRCSKL.

An NADP(+)-binding site is contributed by R47. FMN is bound by residues 123–125 (RSS), G283, 298–302 (KPTSS), and R326.

This sequence belongs to the chorismate synthase family. Homotetramer. It depends on FMNH2 as a cofactor.

It catalyses the reaction 5-O-(1-carboxyvinyl)-3-phosphoshikimate = chorismate + phosphate. It functions in the pathway metabolic intermediate biosynthesis; chorismate biosynthesis; chorismate from D-erythrose 4-phosphate and phosphoenolpyruvate: step 7/7. Catalyzes the anti-1,4-elimination of the C-3 phosphate and the C-6 proR hydrogen from 5-enolpyruvylshikimate-3-phosphate (EPSP) to yield chorismate, which is the branch point compound that serves as the starting substrate for the three terminal pathways of aromatic amino acid biosynthesis. This reaction introduces a second double bond into the aromatic ring system. This Chlamydia pneumoniae (Chlamydophila pneumoniae) protein is Chorismate synthase.